The primary structure comprises 447 residues: Trichothecene C-3 esterase (447 aa).

Residues 1–22 form the signal peptide; the sequence is MALNRLVFSLSLWLGFIGAAQA. N-linked (GlcNAc...) asparagine glycosylation is found at asparagine 59, asparagine 66, asparagine 136, and asparagine 189. Serine 202 (charge relay system) is an active-site residue. Asparagine 238, asparagine 284, and asparagine 314 each carry an N-linked (GlcNAc...) asparagine glycan. Catalysis depends on charge relay system residues aspartate 352 and histidine 384. 2 N-linked (GlcNAc...) asparagine glycosylation sites follow: asparagine 389 and asparagine 423.

Belongs to the AB hydrolase superfamily. Lipase family.

Its pathway is sesquiterpene biosynthesis; trichothecene biosynthesis. Functionally, trichothecene C-3 esterase; part of the core gene cluster that mediates the biosynthesis of trichothecenes, a very large family of chemically related bicyclic sesquiterpene compounds acting as mycotoxins, including T2-toxin. The biosynthesis of trichothecenes begins with the cyclization of farnesyl diphosphate to trichodiene and is catalyzed by the trichodiene synthase TRI5. Trichodiene undergoes a series of oxygenations catalyzed by the cytochrome P450 monooxygenase TRI4. TRI4 controls the addition of four oxygens at C-2, C-3, C-11, and the C-12, C-13-epoxide to form the intermediate isotrichotriol. Isotrichotriol then undergoes a non-enzymatic isomerization and cyclization to form isotrichodermol. During this process, the oxygen at the C-2 position becomes the pyran ring oxygen and the hydroxyl group at C-11 is lost. More complex type A trichothecenes are built by modifying isotrichodermol through a series of paired hydroxylation and acetylation or acylation steps. Isotrichodermol is converted to isotrichodermin by the acetyltransferase TRI101. TRI101 encodes a C-3 transacetylase that acts as a self-protection or resistance factor during biosynthesis and that the presence of a free C-3 hydroxyl group is a key component of Fusarium trichothecene phytotoxicity. A second hydroxyl group is added to C-15 by the trichothecene C-15 hydroxylase TRI11, producing 15-decalonectrin, which is then acetylated by TRI3, producing calonectrin. A third hydroxyl group is added at C-4 by the cytochrome P450 monooxygenase TRI13, converting calonectrin to 3,15-diacetoxyspirpenol, which is subsequently acetylated by the acetyltransferase TRI7. A fourth hydroxyl group is added to C-8 by the cytochrome P450 monooxygenase TRI1, followed by the addition of an isovaleryl moiety by TRI16. Finally, the acetyl group is removed from the C-3 position by the trichothecene C-3 esterase TRI8 to produce T-2 toxin. This is Trichothecene C-3 esterase from Fusarium sporotrichioides.